A 384-amino-acid polypeptide reads, in one-letter code: Mannitol-1-phosphate 5-dehydrogenase (384 aa).

An NAD(+)-binding site is contributed by 3–14 (AVHFGAGNIGRG).

The protein belongs to the mannitol dehydrogenase family.

It catalyses the reaction D-mannitol 1-phosphate + NAD(+) = beta-D-fructose 6-phosphate + NADH + H(+). This chain is Mannitol-1-phosphate 5-dehydrogenase, found in Arthrobacter sp. (strain FB24).